The sequence spans 256 residues: MSEKRVEKKLIHYVKKALNDYRMINTGDRVMVCLSGGKDSYTLLSLLNSIRIEGNYKFDIFAFVLDQSQPGWDDSALRGWLDDKKIPYEILTRDTYSIVKEKIPAGKTYCSLCSRLRRGIIYRYAEEQGFSKIALGHHRDDLIQTLLMSVFYNGQIRSMPPKLLSDNRRHVLIRPLAYCQERDIIKYAMEQQFPLIPCNLCGSQKNLMRQRVKRLISDLAKENPKVPSNMLRALSNIKPSQLMDHELWNFRELNVD.

Positions 35-40 (SGGKDS) match the PP-loop motif motif. [4Fe-4S] cluster contacts are provided by Cys110, Cys113, and Cys201.

The protein belongs to the TtcA family. As to quaternary structure, homodimer. Mg(2+) serves as cofactor. The cofactor is [4Fe-4S] cluster.

Its subcellular location is the cytoplasm. It carries out the reaction cytidine(32) in tRNA + S-sulfanyl-L-cysteinyl-[cysteine desulfurase] + AH2 + ATP = 2-thiocytidine(32) in tRNA + L-cysteinyl-[cysteine desulfurase] + A + AMP + diphosphate + H(+). It functions in the pathway tRNA modification. Its function is as follows. Catalyzes the ATP-dependent 2-thiolation of cytidine in position 32 of tRNA, to form 2-thiocytidine (s(2)C32). The sulfur atoms are provided by the cysteine/cysteine desulfurase (IscS) system. This chain is tRNA-cytidine(32) 2-sulfurtransferase, found in Coxiella burnetii (strain RSA 331 / Henzerling II).